We begin with the raw amino-acid sequence, 238 residues long: Ribonuclease PH (238 aa).

Residues arginine 86 and 124–126 (GTR) contribute to the phosphate site.

The protein belongs to the RNase PH family. As to quaternary structure, homohexameric ring arranged as a trimer of dimers.

It carries out the reaction tRNA(n+1) + phosphate = tRNA(n) + a ribonucleoside 5'-diphosphate. Phosphorolytic 3'-5' exoribonuclease that plays an important role in tRNA 3'-end maturation. Removes nucleotide residues following the 3'-CCA terminus of tRNAs; can also add nucleotides to the ends of RNA molecules by using nucleoside diphosphates as substrates, but this may not be physiologically important. Probably plays a role in initiation of 16S rRNA degradation (leading to ribosome degradation) during starvation. The protein is Ribonuclease PH of Yersinia pseudotuberculosis serotype O:1b (strain IP 31758).